We begin with the raw amino-acid sequence, 549 residues long: O-fucosyltransferase 29 (549 aa).

A helical; Signal-anchor for type II membrane protein transmembrane segment spans residues 43–63 (TVMWTWVCGFMLFSLGVISLF). Residue Asn-152 is glycosylated (N-linked (GlcNAc...) asparagine). Substrate is bound at residue 292–294 (HLR). 2 N-linked (GlcNAc...) asparagine glycosylation sites follow: Asn-359 and Asn-527. Residues 506 to 549 (PFSYDKTSTDDEEEDMSEENHNSTSPGHVHLSSADNERDEVFPD) form a disordered region. Residues 540-549 (DNERDEVFPD) are compositionally biased toward basic and acidic residues.

The protein belongs to the glycosyltransferase GT106 family.

The protein localises to the membrane. It participates in glycan metabolism. The protein is O-fucosyltransferase 29 of Arabidopsis thaliana (Mouse-ear cress).